The sequence spans 636 residues: 1-deoxy-D-xylulose-5-phosphate synthase (636 aa).

Thiamine diphosphate contacts are provided by residues H72 and 113-115 (GHA). D144 contacts Mg(2+). Thiamine diphosphate contacts are provided by residues 145–146 (GA), N174, Y287, and E370. N174 contacts Mg(2+).

The protein belongs to the transketolase family. DXPS subfamily. As to quaternary structure, homodimer. It depends on Mg(2+) as a cofactor. Thiamine diphosphate serves as cofactor.

It catalyses the reaction D-glyceraldehyde 3-phosphate + pyruvate + H(+) = 1-deoxy-D-xylulose 5-phosphate + CO2. The protein operates within metabolic intermediate biosynthesis; 1-deoxy-D-xylulose 5-phosphate biosynthesis; 1-deoxy-D-xylulose 5-phosphate from D-glyceraldehyde 3-phosphate and pyruvate: step 1/1. Catalyzes the acyloin condensation reaction between C atoms 2 and 3 of pyruvate and glyceraldehyde 3-phosphate to yield 1-deoxy-D-xylulose-5-phosphate (DXP). This chain is 1-deoxy-D-xylulose-5-phosphate synthase, found in Crocosphaera subtropica (strain ATCC 51142 / BH68) (Cyanothece sp. (strain ATCC 51142)).